Consider the following 343-residue polypeptide: NADH-quinone oxidoreductase subunit H (343 aa).

8 consecutive transmembrane segments (helical) span residues 19–39 (VAWT…GVAY), 89–109 (ALFI…WAVI), 124–144 (LLYV…AGWA), 158–178 (AAQI…VLMA), 198–218 (WYLW…VAET), 257–277 (ILVA…PVAF), 279–299 (PDGI…FLWF), and 314–334 (LGWK…GGMM).

It belongs to the complex I subunit 1 family. In terms of assembly, NDH-1 is composed of 14 different subunits. Subunits NuoA, H, J, K, L, M, N constitute the membrane sector of the complex.

The protein resides in the cell inner membrane. The enzyme catalyses a quinone + NADH + 5 H(+)(in) = a quinol + NAD(+) + 4 H(+)(out). Its function is as follows. NDH-1 shuttles electrons from NADH, via FMN and iron-sulfur (Fe-S) centers, to quinones in the respiratory chain. The immediate electron acceptor for the enzyme in this species is believed to be ubiquinone. Couples the redox reaction to proton translocation (for every two electrons transferred, four hydrogen ions are translocated across the cytoplasmic membrane), and thus conserves the redox energy in a proton gradient. This subunit may bind ubiquinone. This chain is NADH-quinone oxidoreductase subunit H, found in Thiobacillus denitrificans (strain ATCC 25259 / T1).